We begin with the raw amino-acid sequence, 376 residues long: Cytoplasmic tRNA 2-thiolation protein 1 (376 aa).

This sequence belongs to the TtcA family. CTU1/NCS6/ATPBD3 subfamily.

It is found in the cytoplasm. The protein operates within tRNA modification; 5-methoxycarbonylmethyl-2-thiouridine-tRNA biosynthesis. Its function is as follows. Plays a central role in 2-thiolation of mcm(5)S(2)U at tRNA wobble positions of tRNA(Lys), tRNA(Glu) and tRNA(Gln). Directly binds tRNAs and probably acts by catalyzing adenylation of tRNAs, an intermediate required for 2-thiolation. It is unclear whether it acts as a sulfurtransferase that transfers sulfur from thiocarboxylated URM1 onto the uridine of tRNAs at wobble position. Prior mcm(5) tRNA modification by the elongator complex is required for 2-thiolation. May also be involved in protein urmylation. The polypeptide is Cytoplasmic tRNA 2-thiolation protein 1 (Scheffersomyces stipitis (strain ATCC 58785 / CBS 6054 / NBRC 10063 / NRRL Y-11545) (Yeast)).